Here is a 92-residue protein sequence, read N- to C-terminus: MARSSKRGPFVANHLIREIRNLNIQKKRKLITTWSRASAIVPIMIGHTIAVHNGREHLPIYVTDRMVGHKLGEFVPTRNFRGHAKSDKGSRR.

Belongs to the universal ribosomal protein uS19 family.

It is found in the plastid. The protein localises to the chloroplast. In terms of biological role, protein S19 forms a complex with S13 that binds strongly to the 16S ribosomal RNA. The chain is Small ribosomal subunit protein uS19c from Adiantum capillus-veneris (Maidenhair fern).